Reading from the N-terminus, the 1042-residue chain is Isoleucine--tRNA ligase (1042 aa).

The 'HIGH' region signature appears at 48–58 (PFATGLPHFGH). The short motif at 594–598 (KMSKS) is the 'KMSKS' region element. Residue Lys597 participates in ATP binding.

It belongs to the class-I aminoacyl-tRNA synthetase family. IleS type 2 subfamily. Monomer. Requires Zn(2+) as cofactor.

The protein resides in the cytoplasm. The catalysed reaction is tRNA(Ile) + L-isoleucine + ATP = L-isoleucyl-tRNA(Ile) + AMP + diphosphate. Catalyzes the attachment of isoleucine to tRNA(Ile). As IleRS can inadvertently accommodate and process structurally similar amino acids such as valine, to avoid such errors it has two additional distinct tRNA(Ile)-dependent editing activities. One activity is designated as 'pretransfer' editing and involves the hydrolysis of activated Val-AMP. The other activity is designated 'posttransfer' editing and involves deacylation of mischarged Val-tRNA(Ile). The sequence is that of Isoleucine--tRNA ligase from Borreliella afzelii (strain PKo) (Borrelia afzelii).